A 715-amino-acid polypeptide reads, in one-letter code: MIATLPDEAYAIVEGRHADPFRYLGPHRENERTVVRAFLPEAASVEAVDEKGGTAALERIHDAGLFAGLLPNGSARYQLRARFGDTIVDLEDPYRFPPILTDFDLYLLGEGSHQRLYDKLGAHLMTLDGVEGVGFVVLAPNARRVSVVGDFNFWDSRRHPMRVRGSGYWELFIPRATAGDHYKFEIVSAQGHLLPLKSDPMAFAAEMRPSTASIVLDPERVPHPRPAPAGISALTSPMSIYEVHLGSWRRKDNNDWLSYRELAEQLPAYVRDLGFTHVEFLPINEHPFDGSWGYQPTGLFAPTSRFGTPEDFAALVDACHAHGLGVLLDWVPGHFPDDPHGLAHFDGTSLYEHANPLQGRHNDWGTLIYNYGRTEVVNFLVSNALFWLERYAVDGLRVDAVASMLYLDYSRPAGGWIPNKYGGRENLEAIDFLRRFNTEVFAKFPNATTAAEESTAWPQVSQPVEFGGLGFGYKWNMGWMHDTLNYISMDPIYRKYHHGQILFGLHYAFSENFILPLSHDEVVHGKRSILGRMPGDHWQRFANLRAYYAFMFAHPGKKLMFMGCEFGQDREWNHDSSLDWHLLEQESHRGVQSVVRDLNNLYRTMPALYELDCDSFGFEWIVTDDGDRNVFAWIRKGNAARARCLVIANFSPNVYYDYQVRVPFPGKWREVFNSDSAHYGGSNVGNIGEVEAVGLVPELSLTIPPLAVIFLTPED.

The active-site Nucleophile is aspartate 399. Glutamate 452 serves as the catalytic Proton donor.

This sequence belongs to the glycosyl hydrolase 13 family. GlgB subfamily. As to quaternary structure, monomer.

It carries out the reaction Transfers a segment of a (1-&gt;4)-alpha-D-glucan chain to a primary hydroxy group in a similar glucan chain.. It participates in glycan biosynthesis; glycogen biosynthesis. Catalyzes the formation of the alpha-1,6-glucosidic linkages in glycogen by scission of a 1,4-alpha-linked oligosaccharide from growing alpha-1,4-glucan chains and the subsequent attachment of the oligosaccharide to the alpha-1,6 position. This is 1,4-alpha-glucan branching enzyme GlgB from Rhodopseudomonas palustris (strain BisA53).